The primary structure comprises 387 residues: Acyl-CoA dehydrogenase FadE29 (387 aa).

FAD contacts are provided by residues 123-126 (IGYT), T132, and T158. E241 acts as the Proton acceptor in catalysis. 367–369 (VNE) provides a ligand contact to FAD.

The protein belongs to the acyl-CoA dehydrogenase family. Heterotetramer composed of FadE28 and FadE29. Requires FAD as cofactor.

The catalysed reaction is 3-oxochol-4-en-22-oyl-CoA + A = 3-oxochola-4,17-dien-22-oyl-CoA + AH2. The protein operates within steroid metabolism; cholesterol degradation. Involved in the third cycle of side chain dehydrogenation in the beta-oxidation of cholesterol catabolism. Contributes partly to the virulence by increasing the efficiency of beta-oxidation. Catalyzes the dehydrogenation of 2'-propanoyl-CoA ester side chains of 3-oxo-4-pregnene-20-carboxyl-CoA (3-OPC-CoA) to yield 3-oxo-4,17-pregnadiene-20-carboxyl-CoA (3-OPDC-CoA). Also able to dehydrogenate steroyl-CoA such as 3-oxo-chol-4-en-24-oyl-CoA (3-OCO-CoA), 1beta-(2'-propanoyl-CoA)-3a-alpha-H- 7a-beta-methylhexahydro-4-indanone (indanone-CoA ester), hexahydroindanone and pregenenone. The chain is Acyl-CoA dehydrogenase FadE29 (fadE29) from Mycobacterium tuberculosis (strain ATCC 25618 / H37Rv).